A 225-amino-acid polypeptide reads, in one-letter code: MLRIHKEGKIIIRNSLFILLLLNLALIGGVRMSKSVTTALGISSTLLGLWILYFFRNPTRLINKQEELILSPADGKVVAIKQIYEDEYFKEERIQISIFMSPFNVHVNRSPISGVLEYFKYHPGKYLVAFHPKSSTKNERTTAVVKRIDGIEVLFRQIAGFVARRIKFYPKVGDEVHQGDEVGFIKFGSRLDIFLPLNADIQVNLKEHVRGGKSIIAKIASEEEE.

Serine 189 (schiff-base intermediate with substrate; via pyruvic acid) is an active-site residue. Residue serine 189 is modified to Pyruvic acid (Ser); by autocatalysis.

Belongs to the phosphatidylserine decarboxylase family. PSD-A subfamily. In terms of assembly, heterodimer of a large membrane-associated beta subunit and a small pyruvoyl-containing alpha subunit. Requires pyruvate as cofactor. In terms of processing, is synthesized initially as an inactive proenzyme. Formation of the active enzyme involves a self-maturation process in which the active site pyruvoyl group is generated from an internal serine residue via an autocatalytic post-translational modification. Two non-identical subunits are generated from the proenzyme in this reaction, and the pyruvate is formed at the N-terminus of the alpha chain, which is derived from the carboxyl end of the proenzyme. The post-translation cleavage follows an unusual pathway, termed non-hydrolytic serinolysis, in which the side chain hydroxyl group of the serine supplies its oxygen atom to form the C-terminus of the beta chain, while the remainder of the serine residue undergoes an oxidative deamination to produce ammonia and the pyruvoyl prosthetic group on the alpha chain.

The protein localises to the cell membrane. It catalyses the reaction a 1,2-diacyl-sn-glycero-3-phospho-L-serine + H(+) = a 1,2-diacyl-sn-glycero-3-phosphoethanolamine + CO2. Its pathway is phospholipid metabolism; phosphatidylethanolamine biosynthesis; phosphatidylethanolamine from CDP-diacylglycerol: step 2/2. In terms of biological role, catalyzes the formation of phosphatidylethanolamine (PtdEtn) from phosphatidylserine (PtdSer). This Amoebophilus asiaticus (strain 5a2) protein is Phosphatidylserine decarboxylase proenzyme.